The primary structure comprises 147 residues: Fluoride-specific ion channel FluC 1 (147 aa).

The next 4 helical transmembrane spans lie at Tyr-29–Leu-49, Ile-61–Phe-81, Ala-90–Ile-110, and Phe-118–Val-138. 2 residues coordinate Na(+): Gly-97 and Thr-100.

This sequence belongs to the fluoride channel Fluc/FEX (TC 1.A.43) family.

The protein resides in the cell membrane. It carries out the reaction fluoride(in) = fluoride(out). With respect to regulation, na(+) is not transported, but it plays an essential structural role and its presence is essential for fluoride channel function. Fluoride-specific ion channel. Important for reducing fluoride concentration in the cell, thus reducing its toxicity. In Staphylococcus aureus (strain Mu50 / ATCC 700699), this protein is Fluoride-specific ion channel FluC 1.